A 417-amino-acid polypeptide reads, in one-letter code: BSD domain-containing protein 1-B (417 aa).

The region spanning 153–205 is the BSD domain; sequence WLAYWDPEQRKAEISEPLVTSPSIRALFTKMVPAAVSHSEFWQRYFYKVHQLE. Disordered regions lie at residues 215–234, 262–292, and 323–390; these read KQRA…EEEE, HVED…SISP, and AAET…DFDM. The span at 262 to 278 shows a compositional bias: basic and acidic residues; the sequence is HVEDKSEKTAELNRDHT. A compositionally biased stretch (low complexity) spans 281–292; that stretch reads TSPSESSESISP. A compositionally biased stretch (polar residues) spans 332–343; it reads PVEQTGKSNAQM. A compositionally biased stretch (basic and acidic residues) spans 345 to 356; it reads THREDPPSDLRV. The span at 360 to 379 shows a compositional bias: polar residues; the sequence is NSDSGKSTPSNNGQKGSSTD. Residues 380-390 show a composition bias toward acidic residues; sequence VSEDWEKDFDM.

This Xenopus laevis (African clawed frog) protein is BSD domain-containing protein 1-B (bsdc1-b).